A 220-amino-acid polypeptide reads, in one-letter code: MNVILFGPPGAGKGTQAQYVVERFGIPQISTGDMLRAAVKNCTPLGLKAKEIMDAGGLVSDEIVLGIVADRLSCEDCGTGFVLDGFPRTIPQAEALIEILACLGKQTDHVISLEVSNDEITRRLSGRRTCPSCGKGFHVLFAPPRKAGVCDFCGADLVQRGDDHPESICNRLSVYEKQTSPLKAFYAQKGLLRAVDGSLPVEQIQLQIRKVLEGCSSDCA.

10–15 provides a ligand contact to ATP; sequence GAGKGT. Positions 30 to 59 are NMP; that stretch reads STGDMLRAAVKNCTPLGLKAKEIMDAGGLV. Residues Thr-31, Arg-36, 57–59, 85–88, and Gln-92 each bind AMP; these read GLV and GFPR. Positions 126–163 are LID; sequence GRRTCPSCGKGFHVLFAPPRKAGVCDFCGADLVQRGDD. Position 127 (Arg-127) interacts with ATP. Zn(2+) is bound by residues Cys-130, Cys-133, Cys-150, and Cys-153. The AMP site is built by Arg-160 and Arg-171. Leu-199 contributes to the ATP binding site.

Belongs to the adenylate kinase family. In terms of assembly, monomer.

The protein localises to the cytoplasm. It carries out the reaction AMP + ATP = 2 ADP. It functions in the pathway purine metabolism; AMP biosynthesis via salvage pathway; AMP from ADP: step 1/1. Functionally, catalyzes the reversible transfer of the terminal phosphate group between ATP and AMP. Plays an important role in cellular energy homeostasis and in adenine nucleotide metabolism. The protein is Adenylate kinase of Pelobacter propionicus (strain DSM 2379 / NBRC 103807 / OttBd1).